A 522-amino-acid chain; its full sequence is WEB family protein At2g38370 (522 aa).

Residues 1 to 32 (MAEFPEPGTVNPDSDLSNGRAEKPEIDTSAPF) are disordered. Coiled-coil stretches lie at residues 77–264 (ELQR…AARE) and 299–376 (ARSA…RSEN). Disordered stretches follow at residues 374–397 (SENG…SRRE) and 458–493 (MSLG…RKRK). Residues 473–486 (TVSKRSEGKENEKR) are compositionally biased toward basic and acidic residues.

This sequence belongs to the WEB family.

This is WEB family protein At2g38370 from Arabidopsis thaliana (Mouse-ear cress).